We begin with the raw amino-acid sequence, 352 residues long: N-acetyl-gamma-glutamyl-phosphate reductase (352 aa).

The active site involves cysteine 155.

This sequence belongs to the NAGSA dehydrogenase family. Type 1 subfamily.

It localises to the cytoplasm. The enzyme catalyses N-acetyl-L-glutamate 5-semialdehyde + phosphate + NADP(+) = N-acetyl-L-glutamyl 5-phosphate + NADPH + H(+). Its pathway is amino-acid biosynthesis; L-arginine biosynthesis; N(2)-acetyl-L-ornithine from L-glutamate: step 3/4. Functionally, catalyzes the NADPH-dependent reduction of N-acetyl-5-glutamyl phosphate to yield N-acetyl-L-glutamate 5-semialdehyde. The polypeptide is N-acetyl-gamma-glutamyl-phosphate reductase (Crocosphaera subtropica (strain ATCC 51142 / BH68) (Cyanothece sp. (strain ATCC 51142))).